Here is a 291-residue protein sequence, read N- to C-terminus: m-AAA protease-interacting protein 1, mitochondrial (291 aa).

The transit peptide at 1-96 (MALAARLLPL…SLPASPSRSY (96 aa)) directs the protein to the mitochondrion.

As to quaternary structure, interacts with AFG3L2. Interacts with SPG7. Interacts with SMDT1/EMRE (via the N-terminal transit peptide); interaction is direct and takes place before maturation of SMDT1/EMRE.

The protein localises to the mitochondrion matrix. Functionally, promotes sorting of SMDT1/EMRE in mitochondria by ensuring its maturation. Interacts with the transit peptide region of SMDT1/EMRE precursor protein in the mitochondrial matrix, leading to protect it against protein degradation by YME1L1, thereby ensuring SMDT1/EMRE maturation by the mitochondrial processing peptidase (PMPCA and PMPCB). The sequence is that of m-AAA protease-interacting protein 1, mitochondrial from Mus musculus (Mouse).